A 530-amino-acid polypeptide reads, in one-letter code: Rho GTPase-activating protein 36 (530 aa).

Positions 1 to 19 are cleaved as a signal peptide; sequence MPPLLLLSALIFLVNVLGG. The Rho-GAP domain maps to 209 to 409; it reads MSLNPIAKQI…AMIDNWDVLF (201 aa). A disordered region spans residues 471 to 512; sequence GQSKPFDEGSSEEPAVPPGTARSHDDEEGAGNPLILEQDRPL.

May interacts (via the Rho-GAP domain) with the active form of RAC1.

In terms of biological role, GTPase activator for the Rho-type GTPases by converting them to an inactive GDP-bound state. This chain is Rho GTPase-activating protein 36 (ARHGAP36), found in Bos taurus (Bovine).